Here is a 172-residue protein sequence, read N- to C-terminus: Large ribosomal subunit protein uL10 (172 aa).

This sequence belongs to the universal ribosomal protein uL10 family. As to quaternary structure, part of the ribosomal stalk of the 50S ribosomal subunit. The N-terminus interacts with L11 and the large rRNA to form the base of the stalk. The C-terminus forms an elongated spine to which L12 dimers bind in a sequential fashion forming a multimeric L10(L12)X complex.

Forms part of the ribosomal stalk, playing a central role in the interaction of the ribosome with GTP-bound translation factors. The polypeptide is Large ribosomal subunit protein uL10 (Chlamydia trachomatis serovar A (strain ATCC VR-571B / DSM 19440 / HAR-13)).